The following is a 757-amino-acid chain: MSGNNLSGNDEFDEQLRMQELYGGDPKEGDTQNEPSGEAHSLGQPPDDTPYEWDLDKKAWFPKITEDFIATYQANYGFSSDGASSSTANVQDANTKAVEEPPQKEVPETPDSKRKGEKRKAESGWFHVEEDRNTNVYVSGLPPDITVDEFIQLMSKFGIIMRDPQTEEFKVKLYKDDQGNLKGDGLCCYLKKESVELALKLLDEDEIRGYKLHVEVAKFQLKGEYDASKKKKKCKDYKKKLSLQQKQLDWRPERRAGPNRLRHERVVILKNMFHPMDFEDDPLVLNEIREDLRVECSKFGQIRKLLLFDRHPDGVASVSFREPEEADHCIQTLDGRWFGGRQITAQAWDGTTDYQVEETSREREERLRGWEAFLNAPEASRGLRRMDSIAGSERPGPSRMRHFSEHPSMSNMKAQEATTGMAFEETIDENKFEKAEEGGESEGDASEKDAKEGGSDGDHPEREGGEGCSKKENEEGCPERALEPEEGNPQTEAQENGPEREARKKSKMDYEKNGFSKESEDNDLGKESEGEDSLKKESEDDDSEEESEEDSSEKQSQDGSDKEIEENGVKKDVDQDVSDKEFPEDVEKESEENETDKSEFDEGSERVLDEEGSEREFEEDSDEKEEEGDDDEEEVVYERVFDDDSDDIEEEEEADEKECEDADDKEEDNDIDEKLFDDSDEKEDEEDTDGKKDDDASDKVFEDNSNEKLFDEEEGPNEKLFDDSDERGTVGNVKEDGSQSTDSSFALSSSDDDDDEV.

2 disordered regions span residues 1-54 and 80-123; these read MSGN…YEWD and SDGA…KAES. At Ser2 the chain carries N-acetylserine. Over residues 80–94 the composition is skewed to polar residues; that stretch reads SDGASSSTANVQDAN. The segment covering 97–123 has biased composition (basic and acidic residues); it reads AVEEPPQKEVPETPDSKRKGEKRKAES. RRM domains lie at 134-219 and 265-350; these read TNVY…VAKF and RVVI…AWDG. The tract at residues 260 to 354 is U2AF homology motif (UHM); sequence RLRHERVVIL…AQAWDGTTDY (95 aa). An N6-acetyllysine modification is found at Lys298. Residues 382–757 form a mediates interaction with the P-TEFb complex region; that stretch reads GLRRMDSIAG…SSSDDDDDEV (376 aa). A disordered region spans residues 383 to 417; the sequence is LRRMDSIAGSERPGPSRMRHFSEHPSMSNMKAQEA. 4 positions are modified to phosphoserine: Ser388, Ser404, Ser408, and Ser410. Polar residues predominate over residues 407-417; that stretch reads PSMSNMKAQEA. A Glycyl lysine isopeptide (Lys-Gly) (interchain with G-Cter in SUMO2) cross-link involves residue Lys431. Residues 432 to 757 form a disordered region; it reads FEKAEEGGES…SSSDDDDDEV (326 aa). A phosphoserine mark is found at Ser441, Ser446, Ser519, and Ser528. Composition is skewed to basic and acidic residues over residues 445–483 and 497–538; these read ASEKDAKEGGSDGDHPEREGGEGCSKKENEEGCPERALE and GPER…KKES. The segment covering 539–551 has biased composition (acidic residues); the sequence is EDDDSEEESEEDS. Composition is skewed to basic and acidic residues over residues 552–585 and 595–609; these read SEKQSQDGSDKEIEENGVKKDVDQDVSDKEFPED and TDKSEFDEGSERVLD. Phosphoserine occurs at positions 556, 560, 578, 598, 604, 613, 621, 645, 679, 705, 724, and 749. 3 stretches are compositionally biased toward acidic residues: residues 610–635, 643–671, and 678–688; these read EEGSEREFEEDSDEKEEEGDDDEEEV, DDSDDIEEEEEADEKECEDADDKEEDNDI, and DSDEKEDEEDT. Basic and acidic residues-rich tracts occupy residues 689–709 and 716–737; these read DGKKDDDASDKVFEDNSNEKL and PNEKLFDDSDERGTVGNVKEDG. A compositionally biased stretch (low complexity) spans 738–749; sequence SQSTDSSFALSS.

This sequence belongs to the HTATSF1 family. In terms of assembly, component of the 17S U2 SnRNP complex, a ribonucleoprotein complex that contains small nuclear RNA (snRNA) U2 and a number of specific proteins. Within the 17S U2 SnRNP complex, interacts (via UHM region) directly with SF3B1. Component of a complex which is at least composed of HTATSF1/Tat-SF1, the P-TEFb complex components CDK9 and CCNT1, RNA polymerase II, SUPT5H, and NCL/nucleolin. Interacts with GTF2F2/RAP30 and POLR2A. Interacts with TCERG1/CA150. Interacts with (poly-ADP-ribosylated) RPA1; promoting HTATSF1 recruitment to DNA damage sites. Interacts (when phosphorylated) with TOPBP1; promoting recruitment of TOPBP1 to DNA damage sites during S-phase. Post-translationally, phosphorylation at Ser-749 by CK2 during S-phase in response to DNA damage promotes interaction with TOPBP1 and double-strand break (DSB) repair via homologous recombination.

Its subcellular location is the nucleus. The protein localises to the chromosome. Functionally, component of the 17S U2 SnRNP complex of the spliceosome, a large ribonucleoprotein complex that removes introns from transcribed pre-mRNAs. The 17S U2 SnRNP complex (1) directly participates in early spliceosome assembly and (2) mediates recognition of the intron branch site during pre-mRNA splicing by promoting the selection of the pre-mRNA branch-site adenosine, the nucleophile for the first step of splicing. Within the 17S U2 SnRNP complex, HTATSF1 is required to stabilize the branchpoint-interacting stem loop. HTATSF1 is displaced from the 17S U2 SnRNP complex before the stable addition of the 17S U2 SnRNP complex to the spliceosome, destabilizing the branchpoint-interacting stem loop and allowing to probe intron branch site sequences. Also acts as a regulator of transcriptional elongation, possibly by mediating the reciprocal stimulatory effect of splicing on transcriptional elongation. Involved in double-strand break (DSB) repair via homologous recombination in S-phase by promoting the recruitment of TOPBP1 to DNA damage sites. Mechanistically, HTATSF1 is (1) recruited to DNA damage sites in S-phase via interaction with poly-ADP-ribosylated RPA1 and (2) phosphorylated by CK2, promoting recruitment of TOPBP1, thereby facilitating RAD51 nucleofilaments formation and RPA displacement, followed by homologous recombination. The protein is 17S U2 SnRNP complex component HTATSF1 (Htatsf1) of Mus musculus (Mouse).